The following is a 254-amino-acid chain: Adenosylcobinamide-GDP ribazoletransferase (254 aa).

The next 6 helical transmembrane spans lie at 28–48 (FRQT…IVAL), 62–81 (IGVY…IDGI), 109–129 (VGVG…LGVL), 138–158 (VTFI…ALLV), 179–199 (LSLF…PYLG), and 200–220 (ASPT…IKQW).

Belongs to the CobS family. Requires Mg(2+) as cofactor.

It localises to the cell membrane. It catalyses the reaction alpha-ribazole + adenosylcob(III)inamide-GDP = adenosylcob(III)alamin + GMP + H(+). The enzyme catalyses alpha-ribazole 5'-phosphate + adenosylcob(III)inamide-GDP = adenosylcob(III)alamin 5'-phosphate + GMP + H(+). It participates in cofactor biosynthesis; adenosylcobalamin biosynthesis; adenosylcobalamin from cob(II)yrinate a,c-diamide: step 7/7. In terms of biological role, joins adenosylcobinamide-GDP and alpha-ribazole to generate adenosylcobalamin (Ado-cobalamin). Also synthesizes adenosylcobalamin 5'-phosphate from adenosylcobinamide-GDP and alpha-ribazole 5'-phosphate. This is Adenosylcobinamide-GDP ribazoletransferase from Haloquadratum walsbyi (strain DSM 16790 / HBSQ001).